The primary structure comprises 483 residues: Regulatory protein ViaA (483 aa).

It belongs to the ViaA family. Homodimer. Interacts with RavA.

The protein localises to the cytoplasm. Functionally, component of the RavA-ViaA chaperone complex, which may act on the membrane to optimize the function of some of the respiratory chains. ViaA stimulates the ATPase activity of RavA. The polypeptide is Regulatory protein ViaA (Shigella flexneri serotype 5b (strain 8401)).